We begin with the raw amino-acid sequence, 598 residues long: Aspartate--tRNA(Asp/Asn) ligase (598 aa).

Residue E177 participates in L-aspartate binding. The segment at 201-204 (QLFK) is aspartate. R223 serves as a coordination point for L-aspartate. ATP-binding positions include 223 to 225 (RDE) and Q232. Residue H456 participates in L-aspartate binding. An ATP-binding site is contributed by E493. R500 provides a ligand contact to L-aspartate. ATP is bound at residue 545–548 (GVDR).

It belongs to the class-II aminoacyl-tRNA synthetase family. Type 1 subfamily. Homodimer.

The protein resides in the cytoplasm. The catalysed reaction is tRNA(Asx) + L-aspartate + ATP = L-aspartyl-tRNA(Asx) + AMP + diphosphate. Aspartyl-tRNA synthetase with relaxed tRNA specificity since it is able to aspartylate not only its cognate tRNA(Asp) but also tRNA(Asn). Reaction proceeds in two steps: L-aspartate is first activated by ATP to form Asp-AMP and then transferred to the acceptor end of tRNA(Asp/Asn). The chain is Aspartate--tRNA(Asp/Asn) ligase from Prochlorococcus marinus subsp. pastoris (strain CCMP1986 / NIES-2087 / MED4).